Consider the following 250-residue polypeptide: Ubiquinone/menaquinone biosynthesis C-methyltransferase UbiE (250 aa).

S-adenosyl-L-methionine is bound by residues Thr73, Asp94, and 122–123 (DA).

It belongs to the class I-like SAM-binding methyltransferase superfamily. MenG/UbiE family.

The catalysed reaction is a 2-demethylmenaquinol + S-adenosyl-L-methionine = a menaquinol + S-adenosyl-L-homocysteine + H(+). It catalyses the reaction a 2-methoxy-6-(all-trans-polyprenyl)benzene-1,4-diol + S-adenosyl-L-methionine = a 5-methoxy-2-methyl-3-(all-trans-polyprenyl)benzene-1,4-diol + S-adenosyl-L-homocysteine + H(+). The protein operates within quinol/quinone metabolism; menaquinone biosynthesis; menaquinol from 1,4-dihydroxy-2-naphthoate: step 2/2. It participates in cofactor biosynthesis; ubiquinone biosynthesis. Its function is as follows. Methyltransferase required for the conversion of demethylmenaquinol (DMKH2) to menaquinol (MKH2) and the conversion of 2-polyprenyl-6-methoxy-1,4-benzoquinol (DDMQH2) to 2-polyprenyl-3-methyl-6-methoxy-1,4-benzoquinol (DMQH2). This Coxiella burnetii (strain CbuK_Q154) (Coxiella burnetii (strain Q154)) protein is Ubiquinone/menaquinone biosynthesis C-methyltransferase UbiE.